A 190-amino-acid chain; its full sequence is Large ribosomal subunit protein eL19 (190 aa).

Disordered regions lie at residues threonine 56–lysine 85 and asparagine 166–asparagine 190. Basic residues predominate over residues alanine 72–glycine 83. Positions asparagine 166–leucine 184 are enriched in basic and acidic residues.

Belongs to the eukaryotic ribosomal protein eL19 family. Component of the large ribosomal subunit. Mature ribosomes consist of a small (40S) and a large (60S) subunit. The 40S subunit contains about 32 different proteins and 1 molecule of RNA (18S). The 60S subunit contains 45 different proteins and 3 molecules of RNA (25S, 5.8S and 5S).

The protein localises to the cytoplasm. Component of the ribosome, a large ribonucleoprotein complex responsible for the synthesis of proteins in the cell. The small ribosomal subunit (SSU) binds messenger RNAs (mRNAs) and translates the encoded message by selecting cognate aminoacyl-transfer RNA (tRNA) molecules. The large subunit (LSU) contains the ribosomal catalytic site termed the peptidyl transferase center (PTC), which catalyzes the formation of peptide bonds, thereby polymerizing the amino acids delivered by tRNAs into a polypeptide chain. The nascent polypeptides leave the ribosome through a tunnel in the LSU and interact with protein factors that function in enzymatic processing, targeting, and the membrane insertion of nascent chains at the exit of the ribosomal tunnel. RPL19A may play a role in the last stages of translation initiation, in particular subunit joining and shedding/releasing factors. In Candida albicans (strain SC5314 / ATCC MYA-2876) (Yeast), this protein is Large ribosomal subunit protein eL19.